The following is a 464-amino-acid chain: Leucine-rich repeat-containing protein 34 (464 aa).

Positions 1–48 (MAAQPPRPVGERSMGSSREAARAPARSPAWASTQASTPGAALAVQRES) are disordered. Over residues 16–32 (SSREAARAPARSPAWAS) the composition is skewed to low complexity. 2 LRR repeats span residues 295-315 (SLRYLDVSCNKITHDGMVYLA) and 323-345 (TLEVIDLSFNRIENAGANYLSET).

Interacts with NPM1 and NCL.

It is found in the nucleus. The protein localises to the nucleolus. Its subcellular location is the cytoplasm. In terms of biological role, highly expressed in stem cells where it may be involved in regulation of pluripotency. In embryonic stem cells (ESCs), important for normal expression of the pluripotency regulators POU5F1/OCT4 and KLF4. Also important for expression of the ectodermal marker gene NES and the endodermal marker gene GATA4. Promotes stem cell proliferation in vitro. The chain is Leucine-rich repeat-containing protein 34 (LRRC34) from Homo sapiens (Human).